Consider the following 878-residue polypeptide: Ecdysone receptor (878 aa).

2 disordered regions span residues Met1–Asn27 and Gly209–Gly254. Residues Met1 to Leu263 form a modulating region. 2 NR C4-type zinc fingers span residues Cys264–Cys284 and Cys300–Cys324. Residues Cys264 to Pro336 constitute a DNA-binding region (nuclear receptor). The interval Arg344 to Gly374 is disordered. The segment covering Gly365 to Gly374 has biased composition (gly residues). An NR LBD domain is found at Asn419 to Ala654. Low complexity-rich tracts occupy residues Thr698–Pro709 and Gln728–Pro759. Positions Thr698 to Pro759 are disordered.

This sequence belongs to the nuclear hormone receptor family. NR1 subfamily. In terms of assembly, heterodimer of USP and ECR. Only the heterodimer is capable of high-affinity binding to ecdysone. Interacts with trr in an ecdysone-dependent manner. Upon ecdysone stimulation, interacts with Nup98. As to expression, isoform B1 predominates over isoform A in larval tissues, imaginal histoblast nests and midgut islands. Isoform A predominates over B1 in imaginal disks, and the larval prothoracic gland.

Its subcellular location is the nucleus. Functionally, receptor for ecdysone. Binds to ecdysone response elements (ECRES) following ecdysone-binding, and recruitment of a complex containing the histone methyltransferase trr, leads to activate transcription of target genes. The polypeptide is Ecdysone receptor (EcR) (Drosophila melanogaster (Fruit fly)).